The chain runs to 335 residues: Fructose-1,6-bisphosphatase class 1 (335 aa).

Residues E91, D113, L115, and D116 each contribute to the Mg(2+) site. Residues 116–119, N208, and K274 each bind substrate; that span reads DGSS. E280 is a Mg(2+) binding site.

The protein belongs to the FBPase class 1 family. In terms of assembly, homotetramer. It depends on Mg(2+) as a cofactor.

The protein resides in the cytoplasm. It catalyses the reaction beta-D-fructose 1,6-bisphosphate + H2O = beta-D-fructose 6-phosphate + phosphate. The protein operates within carbohydrate biosynthesis; gluconeogenesis. This Chromobacterium violaceum (strain ATCC 12472 / DSM 30191 / JCM 1249 / CCUG 213 / NBRC 12614 / NCIMB 9131 / NCTC 9757 / MK) protein is Fructose-1,6-bisphosphatase class 1.